A 572-amino-acid chain; its full sequence is Nucleolin 1 (572 aa).

Disordered stretches follow at residues 1–312 and 488–572; these read MGKA…ESAT and DEAK…FGDE. The span at 7–21 shows a compositional bias: low complexity; sequence KSVAVAVAPAAVPAK. Basic and acidic residues predominate over residues 27-38; that stretch reads KREAEDEIEKAV. Low complexity-rich tracts occupy residues 45–58 and 72–81; these read AAAAPPAKAVPAPK and KAASSSSGSS. Composition is skewed to acidic residues over residues 82-91, 109-122, 144-156, 177-191, 208-222, 235-247, and 261-276; these read SEEDSSESEE, SSDESSDESSDDED, SESDSDDEMDEDE, DSSESESDESDSDED, STDGSESESDSEDED, SDEEDDSSEESSD, and ESSEESSEEDSDEEDE. Polar residues predominate over residues 300-311; that stretch reads PASNQSQGTESA. RRM domains lie at 311–387 and 411–492; these read ATLF…LAHE and QSIF…EAKP. Composition is skewed to basic and acidic residues over residues 488–520 and 528–545; these read DEAKPKGDSRDGGGRRGGRSGDRFGGRSGDRFG and GGRDGGRRGGRGGRDGGR. Residues 553-566 are compositionally biased toward polar residues; that stretch reads QSRQSAGTASTGKK.

It localises to the nucleus. Its subcellular location is the nucleolus. In terms of biological role, involved in pre-rRNA processing and ribosome assembly. The chain is Nucleolin 1 from Oryza sativa subsp. japonica (Rice).